A 365-amino-acid polypeptide reads, in one-letter code: tRNA 2-selenouridine synthase (365 aa).

The 124-residue stretch at 15–138 folds into the Rhodanese domain; sequence FIAGQPLIDL…MRQYLIGVIE (124 aa). Cysteine 98 serves as the catalytic S-selanylcysteine intermediate.

This sequence belongs to the SelU family. Monomer.

It catalyses the reaction 5-methylaminomethyl-2-thiouridine(34) in tRNA + selenophosphate + (2E)-geranyl diphosphate + H2O + H(+) = 5-methylaminomethyl-2-selenouridine(34) in tRNA + (2E)-thiogeraniol + phosphate + diphosphate. The enzyme catalyses 5-methylaminomethyl-2-thiouridine(34) in tRNA + (2E)-geranyl diphosphate = 5-methylaminomethyl-S-(2E)-geranyl-thiouridine(34) in tRNA + diphosphate. It carries out the reaction 5-methylaminomethyl-S-(2E)-geranyl-thiouridine(34) in tRNA + selenophosphate + H(+) = 5-methylaminomethyl-2-(Se-phospho)selenouridine(34) in tRNA + (2E)-thiogeraniol. The catalysed reaction is 5-methylaminomethyl-2-(Se-phospho)selenouridine(34) in tRNA + H2O = 5-methylaminomethyl-2-selenouridine(34) in tRNA + phosphate. In terms of biological role, involved in the post-transcriptional modification of the uridine at the wobble position (U34) of tRNA(Lys), tRNA(Glu) and tRNA(Gln). Catalyzes the conversion of 2-thiouridine (S2U-RNA) to 2-selenouridine (Se2U-RNA). Acts in a two-step process involving geranylation of 2-thiouridine (S2U) to S-geranyl-2-thiouridine (geS2U) and subsequent selenation of the latter derivative to 2-selenouridine (Se2U) in the tRNA chain. The protein is tRNA 2-selenouridine synthase of Shewanella sp. (strain ANA-3).